The following is a 179-amino-acid chain: ATP synthase subunit delta (179 aa).

The protein belongs to the ATPase delta chain family. In terms of assembly, F-type ATPases have 2 components, F(1) - the catalytic core - and F(0) - the membrane proton channel. F(1) has five subunits: alpha(3), beta(3), gamma(1), delta(1), epsilon(1). F(0) has three main subunits: a(1), b(2) and c(10-14). The alpha and beta chains form an alternating ring which encloses part of the gamma chain. F(1) is attached to F(0) by a central stalk formed by the gamma and epsilon chains, while a peripheral stalk is formed by the delta and b chains.

The protein resides in the cell inner membrane. Its function is as follows. F(1)F(0) ATP synthase produces ATP from ADP in the presence of a proton or sodium gradient. F-type ATPases consist of two structural domains, F(1) containing the extramembraneous catalytic core and F(0) containing the membrane proton channel, linked together by a central stalk and a peripheral stalk. During catalysis, ATP synthesis in the catalytic domain of F(1) is coupled via a rotary mechanism of the central stalk subunits to proton translocation. Functionally, this protein is part of the stalk that links CF(0) to CF(1). It either transmits conformational changes from CF(0) to CF(1) or is implicated in proton conduction. The sequence is that of ATP synthase subunit delta from Anaeromyxobacter sp. (strain Fw109-5).